The primary structure comprises 244 residues: Probable transcriptional regulatory protein DNO_1179 (244 aa).

The protein belongs to the TACO1 family.

It is found in the cytoplasm. This chain is Probable transcriptional regulatory protein DNO_1179, found in Dichelobacter nodosus (strain VCS1703A).